The sequence spans 466 residues: Cysteine--tRNA ligase (466 aa).

C28 contacts Zn(2+). The 'HIGH' region signature appears at 30–40; it reads PTVYNYIHIGN. Residues C208, H233, and E237 each contribute to the Zn(2+) site. The short motif at 265 to 269 is the 'KMSKS' region element; that stretch reads KMSKS. An ATP-binding site is contributed by K268.

Belongs to the class-I aminoacyl-tRNA synthetase family. In terms of assembly, monomer. Zn(2+) serves as cofactor.

It is found in the cytoplasm. The catalysed reaction is tRNA(Cys) + L-cysteine + ATP = L-cysteinyl-tRNA(Cys) + AMP + diphosphate. This chain is Cysteine--tRNA ligase, found in Staphylococcus epidermidis (strain ATCC 35984 / DSM 28319 / BCRC 17069 / CCUG 31568 / BM 3577 / RP62A).